Here is an 82-residue protein sequence, read N- to C-terminus: Small ribosomal subunit protein bS16 (82 aa).

It belongs to the bacterial ribosomal protein bS16 family.

The protein is Small ribosomal subunit protein bS16 of Synechococcus elongatus (strain ATCC 33912 / PCC 7942 / FACHB-805) (Anacystis nidulans R2).